Here is a 138-residue protein sequence, read N- to C-terminus: MRTLWIMAVLLVGVEGSLLEFGRMIKEETGKNPLFSYISYGCYCGWGGQGQPKDATDRCCFVHDCCYGKLWSCSPKTDIYFYYRKNGAIVCARGTWCEKQICECDKAAAICFRENLGTYKDEYQSYGKSRCTEKSLKC.

The signal sequence occupies residues 1–16; it reads MRTLWIMAVLLVGVEG. 7 disulfides stabilise this stretch: Cys42–Cys131, Cys44–Cys60, Cys59–Cys111, Cys65–Cys138, Cys66–Cys104, Cys73–Cys97, and Cys91–Cys102. Residues Tyr43, Gly45, and Gly47 each coordinate Ca(2+). Residue His63 is part of the active site. Ca(2+) is bound at residue Asp64. Asp105 is an active-site residue.

In terms of assembly, monomer. Ca(2+) serves as cofactor. Expressed by the venom gland.

The protein resides in the secreted. It carries out the reaction a 1,2-diacyl-sn-glycero-3-phosphocholine + H2O = a 1-acyl-sn-glycero-3-phosphocholine + a fatty acid + H(+). Its function is as follows. Snake venom phospholipase A2 (PLA2) that impairs hemostasis. It weakly inhibits ADP-induced platelet aggregation when tested on platelet rich plasma from human and rabbit blood (15-25% of inhibition at 5-10 ug of enzyme), and dose-dependently inhibits blood coagulation, possibly by inhibiting thrombin activation. Exhibits strong hydrolytic activities toward L-dipalmitoyl phosphatidylcholine. PLA2 catalyzes the calcium-dependent hydrolysis of the 2-acyl groups in 3-sn-phosphoglycerides. The sequence is that of Basic phospholipase A2 Tbo-G6D49 from Craspedocephalus borneensis (Borneo pit viper).